The sequence spans 1040 residues: ATPase family AAA domain-containing protein 2 (1040 aa).

The span at 1–11 shows a compositional bias: basic residues; that stretch reads MSLLKMRRHAI. Residues 1 to 30 form a disordered region; the sequence is MSLLKMRRHAIHSSDSTSSSSSEDDCFERR. S65 carries the post-translational modification Phosphoserine. An ATP-binding site is contributed by 122–129; it reads GPPGTGKT. Phosphoserine is present on residues S401 and S406. 2 coiled-coil regions span residues 619–643 and 735–761; these read LTAEEVKRLEEQEEDTFRELRIFLR and YAIIKEELDEDFEQLCEEIQESRKKRG. In terms of domain architecture, Bromo spans 629 to 741; the sequence is EQEEDTFREL…DTAYAIIKEE (113 aa). The segment at 772 to 799 is disordered; that stretch reads YHVMPKQNSPPVGDKKPDQEQNEKLKVP. Glycyl lysine isopeptide (Lys-Gly) (interchain with G-Cter in SUMO2) cross-links involve residues K777 and K797. Residues 784 to 797 are compositionally biased toward basic and acidic residues; the sequence is GDKKPDQEQNEKLK. T801 and T825 each carry phosphothreonine. Residues 811–833 show a composition bias toward basic residues; that stretch reads LKRKFHKKSKWHVGTKIKRRKIS. Positions 811–935 are disordered; the sequence is LKRKFHKKSK…SQVTDIPEDS (125 aa). Polar residues predominate over residues 835–848; it reads AKDNSLNAMNSSSR. Phosphoserine occurs at positions 849, 883, and 891. Basic and acidic residues-rich tracts occupy residues 849–863 and 874–885; these read SDTEDSQHTHAEHTE and ESDKQNRLESNI. Over residues 901–919 the composition is skewed to basic and acidic residues; it reads EEPKETTEGTELRKDRIVC. Position 951 is a phosphoserine (S951). T972 bears the Phosphothreonine mark.

The protein belongs to the AAA ATPase family. As to quaternary structure, interacts with ESR1 and NCOA3 and these interactions are enhanced by estradiol. Interacts with acetylated lysine residues on histone H1.4, H2A, H2B and H3 (in vitro).

The protein localises to the nucleus. It carries out the reaction ATP + H2O = ADP + phosphate + H(+). Its function is as follows. May be a transcriptional coactivator of the nuclear receptor ESR1 required to induce the expression of a subset of estradiol target genes, such as CCND1, MYC and E2F1. May play a role in the recruitment or occupancy of CREBBP at some ESR1 target gene promoters. May be required for histone hyperacetylation. The protein is ATPase family AAA domain-containing protein 2 (Atad2) of Mus musculus (Mouse).